The primary structure comprises 83 residues: EMBRYO SURROUNDING FACTOR 1.1 (83 aa).

Positions 1-22 are cleaved as a signal peptide; that stretch reads MKSSHTSLICILMLSLVALHQC. 4 disulfides stabilise this stretch: Cys41–Cys56, Cys46–Cys75, Cys54–Cys71, and Cys57–Cys64.

Belongs to the MEG family. As to expression, expressed exclusively in ovule embryo sacs and in early developing endosperms.

Functionally, maternally-contributed central cell peptide regulating suspensor development and correct auxin distribution in early developing embryos. In Arabidopsis thaliana (Mouse-ear cress), this protein is EMBRYO SURROUNDING FACTOR 1.1 (ESF1.1).